The chain runs to 507 residues: ATP synthase subunit alpha, chloroplastic (507 aa).

170–177 (GDRQTGKT) lines the ATP pocket.

The protein belongs to the ATPase alpha/beta chains family. F-type ATPases have 2 components, CF(1) - the catalytic core - and CF(0) - the membrane proton channel. CF(1) has five subunits: alpha(3), beta(3), gamma(1), delta(1), epsilon(1). CF(0) has four main subunits: a, b, b' and c.

It is found in the plastid. The protein localises to the chloroplast thylakoid membrane. The enzyme catalyses ATP + H2O + 4 H(+)(in) = ADP + phosphate + 5 H(+)(out). Produces ATP from ADP in the presence of a proton gradient across the membrane. The alpha chain is a regulatory subunit. The chain is ATP synthase subunit alpha, chloroplastic from Sorghum bicolor (Sorghum).